A 426-amino-acid polypeptide reads, in one-letter code: Histidine--tRNA ligase 1 (426 aa).

Belongs to the class-II aminoacyl-tRNA synthetase family. In terms of assembly, homodimer.

The protein resides in the cytoplasm. It carries out the reaction tRNA(His) + L-histidine + ATP = L-histidyl-tRNA(His) + AMP + diphosphate + H(+). The sequence is that of Histidine--tRNA ligase 1 from Bacillus cereus (strain ATCC 14579 / DSM 31 / CCUG 7414 / JCM 2152 / NBRC 15305 / NCIMB 9373 / NCTC 2599 / NRRL B-3711).